A 115-amino-acid chain; its full sequence is Large ribosomal subunit protein bL19 (115 aa).

It belongs to the bacterial ribosomal protein bL19 family.

Its function is as follows. This protein is located at the 30S-50S ribosomal subunit interface and may play a role in the structure and function of the aminoacyl-tRNA binding site. This is Large ribosomal subunit protein bL19 from Clostridium perfringens (strain ATCC 13124 / DSM 756 / JCM 1290 / NCIMB 6125 / NCTC 8237 / Type A).